The sequence spans 481 residues: MANHRMSEATNHNHNHHLPYSLIHGLNNNHPSSGFINQDGSSSFDFGELEEAIVLQGVKYRNEEAKPPLLGGGGGATTLEMFPSWPIRTHQTLPTESSKSGGESSDSGSANFSGKAESQQPESPMSSKHHLMLQPHHNNMANSSSTSGLPSTSRTLAPPKPSEDKRKATTSGKQLDAKTLRRLAQNREAARKSRLRKKAYVQQLESSRIKLSQLEQELQRARSQGLFMGGCGPPGPNITSGAAIFDMEYGRWLEDDNRHMSEIRTGLQAHLSDNDLRLIVDGYIAHFDEIFRLKAVAAKADVFHLIIGTWMSPAERCFIWMAGFRPSDLIKILVSQMDLLTEQQLMGIYSLQHSSQQAEEALSQGLEQLQQSLIDTLAASPVIDGMQQMAVALGKISNLEGFIRQADNLRQQTVHQLRRILTVRQAARCFLVIGEYYGRLRALSSLWLSRPRETLMSDETSCQTTTDLQIVQSSRNHFSNF.

Residues 91–181 (QTLPTESSKS…GKQLDAKTLR (91 aa)) form a disordered region. Over residues 97–109 (SSKSGGESSDSGS) the composition is skewed to low complexity. Residues 110-126 (ANFSGKAESQQPESPMS) are compositionally biased toward polar residues. Residues 143 to 155 (SSSTSGLPSTSRT) show a composition bias toward low complexity. The Nuclear localization signal signature appears at 165 to 172 (KRKATTSG). A bZIP domain is found at 176–220 (DAKTLRRLAQNREAARKSRLRKKAYVQQLESSRIKLSQLEQELQR). The segment at 178 to 198 (KTLRRLAQNREAARKSRLRKK) is basic motif. Residues 204–218 (LESSRIKLSQLEQEL) are leucine-zipper. In terms of domain architecture, DOG1 spans 242-450 (AAIFDMEYGR…RALSSLWLSR (209 aa)).

It belongs to the bZIP family. As to quaternary structure, homodimer. Binds DNA as a dimer. Interacts with floral glutaredoxins GRXC7/ROXY1 and GRXC8/ROXY2 in the nucleus. Interacts with TGA1, TGA2, TGA3, TGA4, TGA5, TGA6, TGA7, TGA10 and PAN. As to expression, mostly expressed in stems, inflorescence apex and flowers, and, to a lower extent, in seedlings, leaves and siliques.

Its subcellular location is the nucleus. Functionally, together with TGA10, basic leucine-zipper transcription factor required for anther development, probably via the activation of SPL expression in anthers and via the regulation of genes with functions in early and middle tapetal development. Required for signaling responses to pathogen-associated molecular patterns (PAMPs) such as flg22 that involves chloroplastic reactive oxygen species (ROS) production and subsequent expression of H(2)O(2)-responsive genes. The sequence is that of Transcription factor TGA9 from Arabidopsis thaliana (Mouse-ear cress).